The primary structure comprises 280 residues: Protein YibA (280 aa).

The sequence is that of Protein YibA (yibA) from Escherichia coli O157:H7.